The sequence spans 883 residues: Phosphoenolpyruvate carboxylase (883 aa).

Residues H138 and K546 contribute to the active site.

This sequence belongs to the PEPCase type 1 family. Mg(2+) is required as a cofactor.

The enzyme catalyses oxaloacetate + phosphate = phosphoenolpyruvate + hydrogencarbonate. In terms of biological role, forms oxaloacetate, a four-carbon dicarboxylic acid source for the tricarboxylic acid cycle. In Erwinia tasmaniensis (strain DSM 17950 / CFBP 7177 / CIP 109463 / NCPPB 4357 / Et1/99), this protein is Phosphoenolpyruvate carboxylase.